We begin with the raw amino-acid sequence, 176 residues long: MALPETLHDFLLVFLGSGLILGSLGVVLLTNPIFSAFSLGLVLVCISLFYILSNSHFVAASQLLIYVGAINILIIFAVMFMNSSEYYQDFNLWTVGDGITLIVCTSIFVSLVTTIPDTSWYGIIWTTRPNQIIEQDLISTSQQIGIHLSTDFFLPFELISIILLVALIGTIVVARQ.

5 helical membrane-spanning segments follow: residues 10–30, 32–52, 63–83, 92–112, and 152–172; these read FLLV…VLLT, PIFS…FYIL, LLIY…FMNS, LWTV…VSLV, and FFLP…GTIV.

The protein belongs to the complex I subunit 6 family. In terms of assembly, NDH is composed of at least 16 different subunits, 5 of which are encoded in the nucleus.

Its subcellular location is the plastid. It localises to the chloroplast thylakoid membrane. It carries out the reaction a plastoquinone + NADH + (n+1) H(+)(in) = a plastoquinol + NAD(+) + n H(+)(out). It catalyses the reaction a plastoquinone + NADPH + (n+1) H(+)(in) = a plastoquinol + NADP(+) + n H(+)(out). NDH shuttles electrons from NAD(P)H:plastoquinone, via FMN and iron-sulfur (Fe-S) centers, to quinones in the photosynthetic chain and possibly in a chloroplast respiratory chain. The immediate electron acceptor for the enzyme in this species is believed to be plastoquinone. Couples the redox reaction to proton translocation, and thus conserves the redox energy in a proton gradient. In Cicer arietinum (Chickpea), this protein is NAD(P)H-quinone oxidoreductase subunit 6, chloroplastic (ndhG).